Consider the following 221-residue polypeptide: Probable septum site-determining protein MinC (221 aa).

This sequence belongs to the MinC family. In terms of assembly, interacts with MinD and FtsZ.

In terms of biological role, cell division inhibitor that blocks the formation of polar Z ring septums. Rapidly oscillates between the poles of the cell to destabilize FtsZ filaments that have formed before they mature into polar Z rings. Prevents FtsZ polymerization. The sequence is that of Probable septum site-determining protein MinC from Shewanella denitrificans (strain OS217 / ATCC BAA-1090 / DSM 15013).